The primary structure comprises 324 residues: Viral cathepsin (324 aa).

An N-terminal signal peptide occupies residues 1–18 (MNKIVLYLLIYVGTFSAA). The propeptide at 19–113 (YDLLKAPSYF…VVLNRPPDKG (95 aa)) is activation peptide. Disulfide bonds link C134–C175, C168–C208, and C263–C311. The active site involves C137. N-linked (GlcNAc...) asparagine; by host glycosylation is present at N159. Catalysis depends on residues H270 and N290.

The protein belongs to the peptidase C1 family. Post-translationally, synthesized as an inactive proenzyme and activated by proteolytic removal of the inhibitory propeptide.

The enzyme catalyses Endopeptidase of broad specificity, hydrolyzing substrates of both cathepsin L and cathepsin B.. Its function is as follows. Cysteine protease that plays an essential role in host liquefaction to facilitate horizontal transmission of the virus. May participate in the degradation of foreign protein expressed by the baculovirus system. The sequence is that of Viral cathepsin (Vcath) from Choristoneura fumiferana defective polyhedrosis virus (Cfdef).